We begin with the raw amino-acid sequence, 1601 residues long: Rap guanine nucleotide exchange factor 6 (1601 aa).

Met-1 is modified (N-acetylmethionine). Disordered regions lie at residues 1–22 (MNSP…ERTP) and 179–250 (PHPQ…QGRD). At Ser-3 the chain carries Phosphoserine. Residues 187–205 (SSSQSGCSIASDSGSSSLS) are compositionally biased toward low complexity. A compositionally biased stretch (acidic residues) spans 228-241 (VDSEDDEEEDEEID). Position 280-399 (280-399 (AFANMTMSVR…VEEEGEIVMV (120 aa))) interacts with a nucleoside 3',5'-cyclic phosphate. Positions 412-526 (KGHIVIKATP…LLNIACAAKA (115 aa)) constitute an N-terminal Ras-GEF domain. One can recognise a PDZ domain in the interval 530–615 (QVVLQKASRE…LTVKTNIFVF (86 aa)). Positions 749–835 (PDQVIRVFKV…GRYYLKNNME (87 aa)) constitute a Ras-associating domain. The region spanning 860-1088 (STIEVATQLS…LDVQGGAHKK (229 aa)) is the Ras-GEF domain. 4 disordered regions span residues 1192–1274 (IRKK…SRSS), 1302–1324 (ESTG…QHGP), 1455–1478 (LEST…VYKT), and 1571–1601 (QRHN…VSAV). Composition is skewed to low complexity over residues 1229–1238 (SVASSLHSSP) and 1255–1274 (SAKS…SRSS). Positions 1586-1601 (TDADSEADENEQVSAV) are enriched in acidic residues.

In terms of assembly, interacts with the second PDZ domain of human PTP1e. In terms of tissue distribution, isoform 3 has highest expression levels in the brain, heart, liver, lung and placenta and is barely detectable in skeletal muscle, kidney and pancreas.

The protein resides in the cytoplasm. It localises to the cell membrane. Guanine nucleotide exchange factor (GEF) for Rap1A, Rap2A and M-Ras GTPases. Does not interact with cAMP. This chain is Rap guanine nucleotide exchange factor 6 (RAPGEF6), found in Homo sapiens (Human).